The chain runs to 451 residues: Secreted RxLR effector protein 70 (451 aa).

An N-terminal signal peptide occupies residues 1 to 17 (MRGAYYIITALLVVASS). A RxLR-dEER motif is present at residues 48-65 (RFLRESRDVHDDLANEER). The interval 303-336 (DAPSNSKHTLGGNKDSSSATTLHKHSKGLSSRPF) is disordered. The segment covering 305–323 (PSNSKHTLGGNKDSSSATT) has biased composition (polar residues).

Belongs to the RxLR effector family.

It localises to the secreted. Its subcellular location is the host nucleus. Functionally, secreted effector that completely suppresses the host cell death induced by cell death-inducing proteins. The polypeptide is Secreted RxLR effector protein 70 (Plasmopara viticola (Downy mildew of grapevine)).